A 950-amino-acid chain; its full sequence is Protein translocase subunit SecA 1 (950 aa).

ATP contacts are provided by residues Gln-83, 101 to 105 (GEGKT), and Asp-490. The segment at 864-950 (EGGAGRKNAA…AKPPKSVKKR (87 aa)) is disordered. Residues 873-888 (AAREEAPSRLRAKGIE) show a composition bias toward basic and acidic residues.

The protein belongs to the SecA family. Monomer and homodimer. Part of the essential Sec protein translocation apparatus which comprises SecA, SecYEG and auxiliary proteins SecDF. Other proteins may also be involved.

The protein resides in the cell membrane. It localises to the cytoplasm. It catalyses the reaction ATP + H2O + cellular proteinSide 1 = ADP + phosphate + cellular proteinSide 2.. In terms of biological role, part of the Sec protein translocase complex. Interacts with the SecYEG preprotein conducting channel. Has a central role in coupling the hydrolysis of ATP to the transfer of proteins into and across the cell membrane, serving as an ATP-driven molecular motor driving the stepwise translocation of polypeptide chains across the membrane. This is Protein translocase subunit SecA 1 from Mycobacterium ulcerans (strain Agy99).